Consider the following 88-residue polypeptide: Small ribosomal subunit protein eS25B (88 aa).

It belongs to the eukaryotic ribosomal protein eS25 family. Component of the small ribosomal subunit (SSU). Mature yeast ribosomes consist of a small (40S) and a large (60S) subunit. The 40S small subunit contains 1 molecule of ribosomal RNA (18S rRNA) and at least 33 different proteins. The large 60S subunit contains 3 rRNA molecules (25S, 5.8S and 5S rRNA) and at least 46 different proteins.

Its subcellular location is the cytoplasm. Functionally, component of the ribosome, a large ribonucleoprotein complex responsible for the synthesis of proteins in the cell. The small ribosomal subunit (SSU) binds messenger RNAs (mRNAs) and translates the encoded message by selecting cognate aminoacyl-transfer RNA (tRNA) molecules. The large subunit (LSU) contains the ribosomal catalytic site termed the peptidyl transferase center (PTC), which catalyzes the formation of peptide bonds, thereby polymerizing the amino acids delivered by tRNAs into a polypeptide chain. The nascent polypeptides leave the ribosome through a tunnel in the LSU and interact with protein factors that function in enzymatic processing, targeting, and the membrane insertion of nascent chains at the exit of the ribosomal tunnel. In Schizosaccharomyces pombe (strain 972 / ATCC 24843) (Fission yeast), this protein is Small ribosomal subunit protein eS25B (rps2501).